We begin with the raw amino-acid sequence, 236 residues long: Elastase-1 (236 aa).

The 236-residue stretch at 1 to 236 (VVGGRVAQPN…AYISWMNGIM (236 aa)) folds into the Peptidase S1 domain. An intrachain disulfide couples Cys-30 to Cys-46. His-45 functions as the Charge relay system in the catalytic mechanism. Positions 59, 61, 64, 66, and 69 each coordinate Ca(2+). The Charge relay system role is filled by Asp-93. 3 disulfides stabilise this stretch: Cys-127/Cys-193, Cys-158/Cys-174, and Cys-183/Cys-213. Ser-187 acts as the Charge relay system in catalysis.

This sequence belongs to the peptidase S1 family. Elastase subfamily. Requires Ca(2+) as cofactor. In terms of tissue distribution, pancreas.

It localises to the secreted. The enzyme catalyses Hydrolysis of proteins, including elastin. Preferential cleavage: Ala-|-Xaa.. In terms of biological role, acts upon elastin. The protein is Elastase-1 of Salmo salar (Atlantic salmon).